The chain runs to 331 residues: Glyoxylate reductase (331 aa).

NADP(+) is bound by residues 158 to 161, 180 to 182, and 239 to 241; these read FGRI, SRT, and TSR. Active-site residues include Arg241 and Glu270. The active-site Proton donor is His288. 288–290 provides a ligand contact to NADP(+); that stretch reads HIG.

This sequence belongs to the D-isomer specific 2-hydroxyacid dehydrogenase family. GyaR subfamily. As to quaternary structure, homodimer.

The protein resides in the cytoplasm. It carries out the reaction glycolate + NAD(+) = glyoxylate + NADH + H(+). This is Glyoxylate reductase from Thermococcus litoralis (strain ATCC 51850 / DSM 5473 / JCM 8560 / NS-C).